The primary structure comprises 63 residues: Large ribosomal subunit protein uL29 (63 aa).

The protein belongs to the universal ribosomal protein uL29 family.

The sequence is that of Large ribosomal subunit protein uL29 from Alteromonas mediterranea (strain DSM 17117 / CIP 110805 / LMG 28347 / Deep ecotype).